The sequence spans 712 residues: Voltage-gated chloride channel TMC4 (712 aa).

A disordered region spans residues 1 to 39 (MEENPTLESEAWGSSRGWLAPREARGAPCSSPGPSLSSV). The Extracellular portion of the chain corresponds to 1–168 (MEENPTLESE…GTESYFSLLR (168 aa)). Residue asparagine 107 is glycosylated (N-linked (GlcNAc...) asparagine). A helical membrane pass occupies residues 169-189 (FLLLLNVLASVLMACMTLLPT). Topologically, residues 190 to 249 (WLGGAPPGPPGPDISSPCGSYNPHSQGLVTFATQLFNLLSGEGYLEWSPLFYGFYPPRPR) are cytoplasmic. The helical transmembrane segment at 250-270 (LAVTYLCWAFAVGLICLLLIL) threads the bilayer. The Extracellular segment spans residues 271-348 (HRSVSGLKQT…GQQARVWLVR (78 aa)). A helical transmembrane segment spans residues 349-369 (VLLNLLVVALLGAAFYGVYWA). At 370 to 394 (TGCTVELQEMPLVQELPLLKLGVNY) the chain is on the cytoplasmic side. The chain crosses the membrane as a helical span at residues 395-415 (LPSIFIAGVNFVLPPVFKLIA). Residues 416-425 (PLEGYTRSRQ) lie on the Extracellular side of the membrane. A helical membrane pass occupies residues 426–446 (IVFILLRTVFLRLASLVVLLF). Residues 447 to 483 (SLWNQITCGGDSEAEDCKTCGYNYKQLPCWETVLGQE) are Cytoplasmic-facing. Residues 484 to 504 (MYKLLLFDLLTVLAVALLIQF) form a helical membrane-spanning segment. The Extracellular portion of the chain corresponds to 505–542 (PRKLLCGLCPGALGRLAGTQEFQVPDEVLGLIYAQTVV). Residues 543-565 (WVGSFFCPLLPLLNTVKFLLLFY) form a helical membrane-spanning segment. Over 566–592 (LKKLTLFSTCSPAARTFRASAANFFFP) the chain is Cytoplasmic. Residues 593–613 (LVLLLGLAISSVPLLYSIFLI) form a helical membrane-spanning segment. At 614 to 654 (PPSKLCGPFRGQSSIWAQIPESISSLPETTQNFLFFLGTQA) the chain is on the extracellular side. Residues 655 to 677 (FAVPLLLISSILMAYTVALANSY) traverse the membrane as a helical segment. Residues 678-712 (GRLISELKRQRQTEAQNKVFLARRAVALTSTKPAL) are Cytoplasmic-facing.

This sequence belongs to the TMC family.

The protein localises to the membrane. It carries out the reaction chloride(in) = chloride(out). Its function is as follows. Voltage-gated chloride channel involved in high-concentration salt taste sensation. Depolarization induced by high NaCl concentration may trigger the activation of TMC4-mediated chloride influx into taste bud cells, helping the return to resting potential. Also allows permeation of organic anions including gluconate, but their current amplitudes at positive potentials are less than that of chloride. Involved in pH and temperature-dependent modulation of salty taste. This chain is Voltage-gated chloride channel TMC4, found in Homo sapiens (Human).